A 507-amino-acid chain; its full sequence is MSQRQVLQVFEQYQKARTQFVQMVAELATRPQNIETLQNAGVMSLLRPLLLDVVPTIQQTAALALGRLANYNDDLAEAVVKGDILPQLVYSLAEQNRFYKKAAAFVLRAVGKHSPQLAQAIVDCGALDTLVICLEDFDPGVKEAAAWALGYIARHNTELSQAVVDAGAIPLLVLCIQEPEIALKRIAASALSDISKHSPELAQTVVDAGAIAHLAQMILNPDAKLKRQVLSALSQIAKHSVDLAEMVVEAEIFPVVLTCLKDKDEYVKKNACTLIREIAKHTPELSQLIVNAGGVAAVIDCIGSCKGNIRLPGIMMLGYVAAHSENLAMAVIISKGVPQLSICLSEEPEDHIKAAAAWALGQLGRHTPEHARAVAVTNTLPVLLSLYMSPESSEDLQLKSKKAIKNILQKCTYLPALEPFLYDAPPNILKHVVGQFSKVLPHDSKARRLFVTSGGLKKVQEIKAEPGSLLQEYINSINNCYPEEIVRYYSPGYSDTLLQRVDSYQPL.

8 ARM repeats span residues 31-70, 73-112, 115-154, 157-196, 199-238, 241-280, 325-365, and 402-441; these read PQNI…RLAN, DDLA…AVGK, PQLA…YIAR, TELS…DISK, PELA…QIAK, VDLA…EIAK, ENLA…QLGR, and KAIK…KVLP.

As to quaternary structure, interacts with SPAG16 and SPAG17. As to expression, highly expressed in testis. Not detected in prostate, ovary, spleen, thymus, small intestine, colon and peripheral blood leukocytes.

It localises to the cytoplasm. The protein localises to the cytoskeleton. It is found in the cell projection. Its subcellular location is the cilium. The protein resides in the flagellum. It localises to the cilium axoneme. In terms of biological role, important for structural integrity of the central apparatus in the sperm tail and for flagellar motility. The protein is Sperm-associated antigen 6 (Spag6) of Mus musculus (Mouse).